The primary structure comprises 616 residues: Sulfite reductase [NADPH] hemoprotein beta-component (616 aa).

The span at 1–10 (MDDHSPRDAA) shows a compositional bias: basic and acidic residues. A disordered region spans residues 1 to 35 (MDDHSPRDAAETPAPGPAATPAKRVYETPPTSRPI). The span at 11–22 (ETPAPGPAATPA) shows a compositional bias: low complexity. Residues cysteine 470, cysteine 476, cysteine 515, and cysteine 519 each contribute to the [4Fe-4S] cluster site. Cysteine 519 is a siroheme binding site.

Belongs to the nitrite and sulfite reductase 4Fe-4S domain family. As to quaternary structure, alpha(8)-beta(8). The alpha component is a flavoprotein, the beta component is a hemoprotein. It depends on siroheme as a cofactor. [4Fe-4S] cluster serves as cofactor.

The enzyme catalyses hydrogen sulfide + 3 NADP(+) + 3 H2O = sulfite + 3 NADPH + 4 H(+). It participates in sulfur metabolism; hydrogen sulfide biosynthesis; hydrogen sulfide from sulfite (NADPH route): step 1/1. Functionally, component of the sulfite reductase complex that catalyzes the 6-electron reduction of sulfite to sulfide. This is one of several activities required for the biosynthesis of L-cysteine from sulfate. The chain is Sulfite reductase [NADPH] hemoprotein beta-component from Methylobacterium radiotolerans (strain ATCC 27329 / DSM 1819 / JCM 2831 / NBRC 15690 / NCIMB 10815 / 0-1).